The primary structure comprises 312 residues: Protoheme IX farnesyltransferase (312 aa).

9 helical membrane-spanning segments follow: residues 31–51 (LLMK…GLFI), 58–78 (PLLS…AGAI), 107–127 (TALT…AICV), 130–150 (ISSI…TMWL), 157–177 (NIVI…SAVT), 184–204 (CLML…TLSL), 229–249 (YSIL…YFTD), 250–270 (IAGL…LCYA), and 286–306 (FKYS…EHCI).

The protein belongs to the UbiA prenyltransferase family. Protoheme IX farnesyltransferase subfamily.

It localises to the cell inner membrane. The enzyme catalyses heme b + (2E,6E)-farnesyl diphosphate + H2O = Fe(II)-heme o + diphosphate. It functions in the pathway porphyrin-containing compound metabolism; heme O biosynthesis; heme O from protoheme: step 1/1. Converts heme B (protoheme IX) to heme O by substitution of the vinyl group on carbon 2 of heme B porphyrin ring with a hydroxyethyl farnesyl side group. This is Protoheme IX farnesyltransferase from Orientia tsutsugamushi (strain Ikeda) (Rickettsia tsutsugamushi).